Here is a 92-residue protein sequence, read N- to C-terminus: Small ribosomal subunit protein uS19 (92 aa).

It belongs to the universal ribosomal protein uS19 family.

Protein S19 forms a complex with S13 that binds strongly to the 16S ribosomal RNA. This is Small ribosomal subunit protein uS19 from Staphylococcus carnosus (strain TM300).